A 67-amino-acid polypeptide reads, in one-letter code: DNA-directed RNA polymerase subunit omega (67 aa).

This sequence belongs to the RNA polymerase subunit omega family. The RNAP catalytic core consists of 2 alpha, 1 beta, 1 beta' and 1 omega subunit. When a sigma factor is associated with the core the holoenzyme is formed, which can initiate transcription.

It carries out the reaction RNA(n) + a ribonucleoside 5'-triphosphate = RNA(n+1) + diphosphate. In terms of biological role, promotes RNA polymerase assembly. Latches the N- and C-terminal regions of the beta' subunit thereby facilitating its interaction with the beta and alpha subunits. This Bordetella pertussis (strain Tohama I / ATCC BAA-589 / NCTC 13251) protein is DNA-directed RNA polymerase subunit omega.